The chain runs to 373 residues: Flagellar P-ring protein (373 aa).

An N-terminal signal peptide occupies residues 1–28 (MPRVSTHLVKLAAAALCALLLSAVAASA).

It belongs to the FlgI family. As to quaternary structure, the basal body constitutes a major portion of the flagellar organelle and consists of four rings (L,P,S, and M) mounted on a central rod.

It is found in the periplasm. The protein resides in the bacterial flagellum basal body. Assembles around the rod to form the L-ring and probably protects the motor/basal body from shearing forces during rotation. This Rhodopseudomonas palustris (strain ATCC BAA-98 / CGA009) protein is Flagellar P-ring protein.